A 132-amino-acid chain; its full sequence is Large ribosomal subunit protein uL24 (132 aa).

The protein belongs to the universal ribosomal protein uL24 family. As to quaternary structure, part of the 50S ribosomal subunit.

One of two assembly initiator proteins, it binds directly to the 5'-end of the 23S rRNA, where it nucleates assembly of the 50S subunit. Functionally, one of the proteins that surrounds the polypeptide exit tunnel on the outside of the subunit. In Aquifex aeolicus (strain VF5), this protein is Large ribosomal subunit protein uL24.